Consider the following 417-residue polypeptide: Gamma-glutamyl phosphate reductase (417 aa).

This sequence belongs to the gamma-glutamyl phosphate reductase family.

The protein localises to the cytoplasm. It catalyses the reaction L-glutamate 5-semialdehyde + phosphate + NADP(+) = L-glutamyl 5-phosphate + NADPH + H(+). Its pathway is amino-acid biosynthesis; L-proline biosynthesis; L-glutamate 5-semialdehyde from L-glutamate: step 2/2. Functionally, catalyzes the NADPH-dependent reduction of L-glutamate 5-phosphate into L-glutamate 5-semialdehyde and phosphate. The product spontaneously undergoes cyclization to form 1-pyrroline-5-carboxylate. In Chlorobium phaeobacteroides (strain BS1), this protein is Gamma-glutamyl phosphate reductase.